Reading from the N-terminus, the 870-residue chain is Aldehyde-alcohol dehydrogenase 2 (870 aa).

Cysteine 252 is a catalytic residue. 431 to 436 (GCGSYG) provides a ligand contact to NAD(+).

It in the N-terminal section; belongs to the aldehyde dehydrogenase family. In the C-terminal section; belongs to the iron-containing alcohol dehydrogenase family. As to quaternary structure, seems to form a rod shaped homomer composed of at least 20 identical subunits. Requires Zn(2+) as cofactor. Fe(2+) is required as a cofactor.

The catalysed reaction is a primary alcohol + NAD(+) = an aldehyde + NADH + H(+). It catalyses the reaction a secondary alcohol + NAD(+) = a ketone + NADH + H(+). It carries out the reaction acetaldehyde + NAD(+) + CoA = acetyl-CoA + NADH + H(+). In terms of biological role, this enzyme has two NAD(+)-dependent activities: ADH and ACDH. May be a critical enzyme in the fermentative pathway. In Entamoeba histolytica (strain ATCC 30459 / HM-1:IMSS / ABRM), this protein is Aldehyde-alcohol dehydrogenase 2 (ADH2).